Reading from the N-terminus, the 368-residue chain is tRNA/tmRNA (uracil-C(5))-methyltransferase (368 aa).

5 residues coordinate S-adenosyl-L-methionine: Gln192, Tyr220, Asn225, Glu241, and Asp301. Cys326 acts as the Nucleophile in catalysis. Glu360 serves as the catalytic Proton acceptor.

It belongs to the class I-like SAM-binding methyltransferase superfamily. RNA M5U methyltransferase family. TrmA subfamily.

It catalyses the reaction uridine(54) in tRNA + S-adenosyl-L-methionine = 5-methyluridine(54) in tRNA + S-adenosyl-L-homocysteine + H(+). It carries out the reaction uridine(341) in tmRNA + S-adenosyl-L-methionine = 5-methyluridine(341) in tmRNA + S-adenosyl-L-homocysteine + H(+). In terms of biological role, dual-specificity methyltransferase that catalyzes the formation of 5-methyluridine at position 54 (m5U54) in all tRNAs, and that of position 341 (m5U341) in tmRNA (transfer-mRNA). The protein is tRNA/tmRNA (uracil-C(5))-methyltransferase of Actinobacillus pleuropneumoniae serotype 7 (strain AP76).